The sequence spans 277 residues: Sulfate transport system permease protein CysT (277 aa).

The next 7 helical transmembrane spans lie at 17–37, 64–84, 99–119, 136–156, 185–205, 215–235, and 243–263; these read LGTS…ALVM, LLSA…MAWI, LMDL…ASLF, VTYT…PFVV, FCKV…ALSF, VIFI…MIFV, and PAAS…LFSI. Residues 60 to 263 enclose the ABC transmembrane type-1 domain; sequence YKVTLLSAFV…AASLLLLFSI (204 aa).

Belongs to the binding-protein-dependent transport system permease family. CysTW subfamily. The complex is composed of two ATP-binding proteins (CysA), two transmembrane proteins (CysT and CysW) and a solute-binding protein (CysP).

The protein localises to the cell inner membrane. Part of the ABC transporter complex CysAWTP (TC 3.A.1.6.1) involved in sulfate/thiosulfate import. Probably responsible for the translocation of the substrate across the membrane. The chain is Sulfate transport system permease protein CysT (cysU) from Escherichia coli (strain K12).